A 389-amino-acid chain; its full sequence is Stilbene synthase 3 (389 aa).

55–58 (KFQR) provides a ligand contact to substrate. The active site involves Cys-164. Substrate contacts are provided by residues Leu-267 and 305 to 307 (GGR).

It belongs to the thiolase-like superfamily. Chalcone/stilbene synthases family. In terms of assembly, homodimer.

It localises to the cytoplasm. It catalyses the reaction 4-coumaroyl-CoA + 3 malonyl-CoA + 3 H(+) = trans-resveratrol + 4 CO2 + 4 CoA. It participates in phytoalexin biosynthesis; 3,4',5-trihydroxystilbene biosynthesis; 3,4',5-trihydroxystilbene from trans-4-coumarate: step 2/2. This is Stilbene synthase 3 from Arachis hypogaea (Peanut).